The following is a 77-amino-acid chain: Large ribosomal subunit protein eL14 (77 aa).

This sequence belongs to the eukaryotic ribosomal protein eL14 family.

This Methanococcus maripaludis (strain C5 / ATCC BAA-1333) protein is Large ribosomal subunit protein eL14.